The chain runs to 761 residues: Phosphoribosylformylglycinamidine synthase subunit PurL (761 aa).

Histidine 49 is an active-site residue. ATP-binding residues include tyrosine 52 and lysine 92. Glutamate 94 is a Mg(2+) binding site. Substrate is bound by residues 95–98 (SHNH) and arginine 117. Residue histidine 96 is the Proton acceptor of the active site. Position 118 (aspartate 118) interacts with Mg(2+). Residue glutamine 241 coordinates substrate. Aspartate 269 serves as a coordination point for Mg(2+). Residue 318-320 (ESQ) participates in substrate binding. Asparagine 502 and glycine 539 together coordinate ATP. Position 540 (asparagine 540) interacts with Mg(2+). Residue serine 542 coordinates substrate.

This sequence belongs to the FGAMS family. In terms of assembly, monomer. Part of the FGAM synthase complex composed of 1 PurL, 1 PurQ and 2 PurS subunits.

It is found in the cytoplasm. The enzyme catalyses N(2)-formyl-N(1)-(5-phospho-beta-D-ribosyl)glycinamide + L-glutamine + ATP + H2O = 2-formamido-N(1)-(5-O-phospho-beta-D-ribosyl)acetamidine + L-glutamate + ADP + phosphate + H(+). The protein operates within purine metabolism; IMP biosynthesis via de novo pathway; 5-amino-1-(5-phospho-D-ribosyl)imidazole from N(2)-formyl-N(1)-(5-phospho-D-ribosyl)glycinamide: step 1/2. In terms of biological role, part of the phosphoribosylformylglycinamidine synthase complex involved in the purines biosynthetic pathway. Catalyzes the ATP-dependent conversion of formylglycinamide ribonucleotide (FGAR) and glutamine to yield formylglycinamidine ribonucleotide (FGAM) and glutamate. The FGAM synthase complex is composed of three subunits. PurQ produces an ammonia molecule by converting glutamine to glutamate. PurL transfers the ammonia molecule to FGAR to form FGAM in an ATP-dependent manner. PurS interacts with PurQ and PurL and is thought to assist in the transfer of the ammonia molecule from PurQ to PurL. The polypeptide is Phosphoribosylformylglycinamidine synthase subunit PurL (Chlorobium luteolum (strain DSM 273 / BCRC 81028 / 2530) (Pelodictyon luteolum)).